Consider the following 322-residue polypeptide: DNA-directed RNA polymerase subunit alpha (322 aa).

The segment at methionine 1–isoleucine 229 is alpha N-terminal domain (alpha-NTD). The interval asparagine 244–leucine 322 is alpha C-terminal domain (alpha-CTD).

This sequence belongs to the RNA polymerase alpha chain family. As to quaternary structure, homodimer. The RNAP catalytic core consists of 2 alpha, 1 beta, 1 beta' and 1 omega subunit. When a sigma factor is associated with the core the holoenzyme is formed, which can initiate transcription.

The enzyme catalyses RNA(n) + a ribonucleoside 5'-triphosphate = RNA(n+1) + diphosphate. In terms of biological role, DNA-dependent RNA polymerase catalyzes the transcription of DNA into RNA using the four ribonucleoside triphosphates as substrates. In Carsonella ruddii (strain PV), this protein is DNA-directed RNA polymerase subunit alpha (rpoA).